A 240-amino-acid polypeptide reads, in one-letter code: Large ribosomal subunit protein uL1 (240 aa).

The protein belongs to the universal ribosomal protein uL1 family. As to quaternary structure, part of the 50S ribosomal subunit.

Binds directly to 23S rRNA. The L1 stalk is quite mobile in the ribosome, and is involved in E site tRNA release. In terms of biological role, protein L1 is also a translational repressor protein, it controls the translation of the L11 operon by binding to its mRNA. The polypeptide is Large ribosomal subunit protein uL1 (Streptomyces griseus subsp. griseus (strain JCM 4626 / CBS 651.72 / NBRC 13350 / KCC S-0626 / ISP 5235)).